We begin with the raw amino-acid sequence, 237 residues long: MQKQAELYRGKAKTVYSTENPDLLVLEFRNDTSAGDGARIEQFDRKGMVNNKFNHFIMSKLADAGIPTQMEALLSDTECLVKKLDMVPVECVVRNRAAGSLVKRLGIEEGIELNPPLFDLFLKNDEMHDPMVNESYCETFGWVSKENLARMQELTFKANDVLKKLFDDAGLILVDFKLEFGLYKGEVVLGDEFSPDGSRLWDKETLDKMDKDRFRQSLGGLIEAYEAVAHRLGVKLD.

This sequence belongs to the SAICAR synthetase family.

The catalysed reaction is 5-amino-1-(5-phospho-D-ribosyl)imidazole-4-carboxylate + L-aspartate + ATP = (2S)-2-[5-amino-1-(5-phospho-beta-D-ribosyl)imidazole-4-carboxamido]succinate + ADP + phosphate + 2 H(+). It participates in purine metabolism; IMP biosynthesis via de novo pathway; 5-amino-1-(5-phospho-D-ribosyl)imidazole-4-carboxamide from 5-amino-1-(5-phospho-D-ribosyl)imidazole-4-carboxylate: step 1/2. This is Phosphoribosylaminoimidazole-succinocarboxamide synthase from Enterobacter sp. (strain 638).